Reading from the N-terminus, the 943-residue chain is MAASGLDHLKNGYRRRFCRPSRARDINTEQGQNVLEILQDCFEEKSLANDFSTNSTKSVPNSTRKIKDTCIQSPSKECQKSHPKSVPVSSKKKEASLQFVVEPSEATNRSVQAHEVHQKILATDVSSKNTPDSKKISSRNINDHHSEADEEFYLSVGSPSVLLDAKTSVSQNVIPSSAQKRETYTFENSVNMLPSSTEVSVKTKKRLNFDDKVMLKKIEIDNKVSDEEDKTSEGQERKPSGSSQNRIRDSEYEIQRQAKKSFSTLFLETVKRKSESSPIVRHAATAPPHSCPPDDTKLIEDEFIIDESDQSFASRSWITIPRKAGSLKQRTISPAESTALLQGRKSREKHHNILPKTLANDKHSHKPHPVETSQPSDKTVLDTSYALIGETVNNYRSTKYEMYSKNAEKPSRSKRTIKQKQRRKFMAKPAEEQLDVGQSKDENIHTSHITQDEFQRNSDRNMEEHEEMGNDCVSKKQMPPVGSKKSSTRKDKEESKKKRFSSESKNKLVPEEVTSTVTKSRRISRRPSDWWVVKSEESPVYSNSSVRNELPMHHNSSRKSTKKTNQSSKNIRKKTIPLKRQKTATKGNQRVQKFLNAEGSGGIVGHDEISRCSLSEPLESDEADLAKKKNLDCSRSTRSSKNEDNIMTAQNVPLKPQTSGYTCNIPTESNLDSGEHKTSVLEESGPSRLNNNYLMSGKNDVDDEEVHGSSDDSKQSKVIPKNRIHHKLVLPSNTPNVRRTKRTRLKPLEYWRGERIDYQGRPSGGFVISGVLSPDTISSKRKAKENIGKVNKKSNKKRICLDNDERKTNLMVNLGIPLGDPLQPTRVKDPETREIILMDLVRPQDTYQFFVKHGELKVYKTLDTPFFSTGKLILGPQEEKGKQHVGQDILVFYVNFGDLLCTLHETPYILSTGDSFYVPSGNYYNIKNLRNEESVLLFTQIKR.

Residue lysine 45 forms a Glycyl lysine isopeptide (Lys-Gly) (interchain with G-Cter in SUMO2) linkage. The interval 70 to 91 (CIQSPSKECQKSHPKSVPVSSK) is disordered. Residues serine 73 and serine 96 each carry the phosphoserine modification. Residue lysine 119 forms a Glycyl lysine isopeptide (Lys-Gly) (interchain with G-Cter in SUMO2) linkage. Threonine 130 is modified (phosphothreonine). Lysine 134 participates in a covalent cross-link: Glycyl lysine isopeptide (Lys-Gly) (interchain with G-Cter in SUMO2). Serine 146 is subject to Phosphoserine. Lysine 180 is covalently cross-linked (Glycyl lysine isopeptide (Lys-Gly) (interchain with G-Cter in SUMO2)). Threonine 183 carries the post-translational modification Phosphothreonine. Serine 189 carries the post-translational modification Phosphoserine. Glycyl lysine isopeptide (Lys-Gly) (interchain with G-Cter in SUMO2) cross-links involve residues lysine 212 and lysine 217. Over residues 224-239 (VSDEEDKTSEGQERKP) the composition is skewed to basic and acidic residues. Residues 224-250 (VSDEEDKTSEGQERKPSGSSQNRIRDS) form a disordered region. A Phosphoserine modification is found at serine 225. Residues lysine 238 and lysine 260 each participate in a glycyl lysine isopeptide (Lys-Gly) (interchain with G-Cter in SUMO2) cross-link. Positions 259-273 (KKSFSTLFLETVKRK) match the Nuclear localization signal motif. Position 261 is a phosphoserine (serine 261). Residues lysine 271, lysine 273, and lysine 297 each participate in a glycyl lysine isopeptide (Lys-Gly) (interchain with G-Cter in SUMO2) cross-link. Phosphoserine occurs at positions 316, 333, 376, and 397. Positions 358 to 377 (LANDKHSHKPHPVETSQPSD) are disordered. Residues 403–513 (YSKNAEKPSR…SKNKLVPEEV (111 aa)) form a disordered region. The span at 412–426 (RSKRTIKQKQRRKFM) shows a compositional bias: basic residues. 2 stretches are compositionally biased toward basic and acidic residues: residues 438-463 (QSKD…RNME) and 488-510 (TRKD…KLVP). At serine 439 the chain carries Phosphoserine. Lysine 440 is covalently cross-linked (Glycyl lysine isopeptide (Lys-Gly) (interchain with G-Cter in SUMO2)). Residues 484–499 (KKSSTRKDKEESKKKR) carry the Nuclear localization signal motif. Position 528 is a phosphoserine (serine 528). Lysine 534 participates in a covalent cross-link: Glycyl lysine isopeptide (Lys-Gly) (interchain with G-Cter in SUMO2). Disordered regions lie at residues 537-587 (ESPV…ATKG) and 632-717 (DCSR…KQSK). Serine 538 bears the Phosphoserine mark. Residues 558-574 (RKSTKKTNQSSKNIRKK) carry the Nuclear localization signal motif. The segment covering 570-583 (NIRKKTIPLKRQKT) has biased composition (basic residues). The span at 633 to 672 (CSRSTRSSKNEDNIMTAQNVPLKPQTSGYTCNIPTESNLD) shows a compositional bias: polar residues. A Glycyl lysine isopeptide (Lys-Gly) (interchain with G-Cter in SUMO2) cross-link involves residue lysine 677. Residues serine 684, serine 709, and serine 710 each carry the phosphoserine modification. Positions 706 to 715 (VHGSSDDSKQ) are enriched in basic and acidic residues. Lysine 727 is covalently cross-linked (Glycyl lysine isopeptide (Lys-Gly) (interchain with G-Cter in SUMO2)). At threonine 734 the chain carries Phosphothreonine. Residues 737 to 759 (VRRTKRTRLKPLEYWRGERIDYQ) form an MIF2 homology domain II region. Phosphoserine occurs at positions 763 and 773. The short motif at 780–798 (KRKAKENIGKVNKKSNKKR) is the Nuclear localization signal element. Lysine 807 is covalently cross-linked (Glycyl lysine isopeptide (Lys-Gly) (interchain with G-Cter in SUMO2)). An MIF2 homology domain III region spans residues 890-943 (LVFYVNFGDLLCTLHETPYILSTGDSFYVPSGNYYNIKNLRNEESVLLFTQIKR).

Belongs to the CENP-C/MIF2 family. As to quaternary structure, oligomer. Component of the CENPA-NAC complex, at least composed of CENPA, CENPC, CENPH, CENPM, CENPN, CENPT and CENPU. The CENPA-NAC complex interacts with the CENPA-CAD complex, composed of CENPI, CENPK, CENPL, CENPO, CENPP, CENPQ, CENPR and CENPS. Binds to DAXX. Interacts with DNMT3B. Interacts directly with CENPA. Identified in a centromere complex containing histones H2A, H2B and H4, and at least CENPA, CENPB, CENPC, CENPT, CENPN, HJURP, SUPT16H, SSRP1 and RSF1. Interacts with MEIKIN.

It localises to the nucleus. The protein resides in the chromosome. Its subcellular location is the centromere. The protein localises to the kinetochore. Component of the CENPA-NAC (nucleosome-associated) complex, a complex that plays a central role in assembly of kinetochore proteins, mitotic progression and chromosome segregation. The CENPA-NAC complex recruits the CENPA-CAD (nucleosome distal) complex and may be involved in incorporation of newly synthesized CENPA into centromeres. CENPC recruits DNA methylation and DNMT3B to both centromeric and pericentromeric satellite repeats and regulates the histone code in these regions. The sequence is that of Centromere protein C (CENPC) from Homo sapiens (Human).